We begin with the raw amino-acid sequence, 214 residues long: Calcineurin B homologous protein 3 (214 aa).

The N-myristoyl glycine moiety is linked to residue Gly-2. Residues 110 to 145 form the EF-hand domain; that stretch reads FRKEKLKFLFHMYDADYDGIITLQEYKNVLDELMSG. Asp-123, Asp-125, Asp-127, and Glu-134 together coordinate Ca(2+).

It belongs to the calcineurin regulatory subunit family. CHP subfamily. Monomer. Homodimer. In terms of tissue distribution, expressed in the bipotential gonad by E4.5 and expressed in both the testis and ovary by E5.5, but with expression higher in the testis. Expressed in the testis cords but also at low levels in the interstitium. In the ovary, expression is principally in the ovarian cortex, but also in the medulla. Also expressed in the embryonic brain, with expression highest in the region between the nasal placode and olfactory bulb. Also expressed in the embryonic heart and tail.

It localises to the nucleus. The protein resides in the cytoplasm. It is found in the membrane. Its subcellular location is the cell membrane. The protein localises to the cell projection. It localises to the lamellipodium. The protein resides in the ruffle membrane. In terms of biological role, functions as an integral cofactor in cell pH regulation by controlling plasma membrane-type Na(+)/H(+) exchange activity. Promotes the induction of hematopoietic stem cell differentiation toward megakaryocytic lineage. Essential for the coupling of ERK cascade activation with the expression of ETS family genes in megakaryocytic differentiation. Also involved in granulocytic differentiation in a ERK-dependent manner. Inhibits the phosphatase activity of calcineurin. The chain is Calcineurin B homologous protein 3 from Gallus gallus (Chicken).